Here is an 84-residue protein sequence, read N- to C-terminus: Three-finger toxin 3FTx-1 (84 aa).

Positions 1–21 are cleaved as a signal peptide; that stretch reads MKTLLLTLVVVTIVCLDLGNS. 4 disulfides stabilise this stretch: C24–C41, C34–C59, C63–C71, and C72–C77. N78 carries N-linked (GlcNAc...) asparagine glycosylation.

The protein belongs to the three-finger toxin family. Short-chain subfamily. In terms of tissue distribution, expressed by the venom gland.

The protein localises to the secreted. The polypeptide is Three-finger toxin 3FTx-1 (Micrurus corallinus (Brazilian coral snake)).